Here is a 588-residue protein sequence, read N- to C-terminus: Succinate dehydrogenase flavoprotein subunit (588 aa).

Residues 14-19 (GAGGAG), 37-52 (SKVF…AQGG), and aspartate 221 each bind FAD. The residue at position 45 (histidine 45) is a Tele-8alpha-FAD histidine. Substrate is bound by residues histidine 242 and threonine 254. At lysine 267 the chain carries N6-acetyllysine. The Proton acceptor role is filled by arginine 286. Histidine 354 lines the substrate pocket. Glutamate 388 provides a ligand contact to FAD. Residue arginine 399 participates in substrate binding. Position 404–405 (404–405 (SL)) interacts with FAD.

The protein belongs to the FAD-dependent oxidoreductase 2 family. FRD/SDH subfamily. Part of an enzyme complex containing four subunits: a flavoprotein, an iron-sulfur, cytochrome b-556, and a hydrophobic anchor protein. The complex forms trimers. FAD is required as a cofactor.

The protein resides in the cell inner membrane. The enzyme catalyses a quinone + succinate = fumarate + a quinol. It functions in the pathway carbohydrate metabolism; tricarboxylic acid cycle; fumarate from succinate (bacterial route): step 1/1. In terms of biological role, two distinct, membrane-bound, FAD-containing enzymes are responsible for the catalysis of fumarate and succinate interconversion; the fumarate reductase is used in anaerobic growth, and the succinate dehydrogenase is used in aerobic growth. This Escherichia coli O157:H7 protein is Succinate dehydrogenase flavoprotein subunit (sdhA).